The primary structure comprises 183 residues: MTANAQQLQFIKDSIETIPDYPKPGVLFRDITTLLDNPLAYQATIDLLVERYQGKGITKIVGTEARGFLFGAPVALRLGVGFIPVRKAGKLPRETLSETYNLEYGTDTLEMHKDSVRENDKVLVIDDLLATGGTVEATVRLIRRLGGEVSEAAFIIGLLGLGGVERLQRQGVSSFTLLEFPDH.

The protein belongs to the purine/pyrimidine phosphoribosyltransferase family. Homodimer.

It localises to the cytoplasm. The enzyme catalyses AMP + diphosphate = 5-phospho-alpha-D-ribose 1-diphosphate + adenine. The protein operates within purine metabolism; AMP biosynthesis via salvage pathway; AMP from adenine: step 1/1. Functionally, catalyzes a salvage reaction resulting in the formation of AMP, that is energically less costly than de novo synthesis. The sequence is that of Adenine phosphoribosyltransferase from Photorhabdus laumondii subsp. laumondii (strain DSM 15139 / CIP 105565 / TT01) (Photorhabdus luminescens subsp. laumondii).